We begin with the raw amino-acid sequence, 192 residues long: A-type ATP synthase subunit E (192 aa).

Belongs to the V-ATPase E subunit family. In terms of assembly, has multiple subunits with at least A(3), B(3), C, D, E, F, H, I and proteolipid K(x).

Its subcellular location is the cell membrane. Functionally, component of the A-type ATP synthase that produces ATP from ADP in the presence of a proton gradient across the membrane. In Halorubrum lacusprofundi (strain ATCC 49239 / DSM 5036 / JCM 8891 / ACAM 34), this protein is A-type ATP synthase subunit E.